We begin with the raw amino-acid sequence, 282 residues long: Ribonuclease 3 (282 aa).

In terms of domain architecture, RNase III spans 18–141 (FVAFFKSLNI…LVAAIYEDLG (124 aa)). Glu-59 provides a ligand contact to Mg(2+). Residue Asp-63 is part of the active site. Positions 127 and 130 each coordinate Mg(2+). The active site involves Glu-130.

It belongs to the ribonuclease III family. Homodimer. Requires Mg(2+) as cofactor.

It is found in the cytoplasm. It catalyses the reaction Endonucleolytic cleavage to 5'-phosphomonoester.. Its function is as follows. Digests double-stranded RNA. Involved in the processing of primary rRNA transcript to yield the immediate precursors to the large and small rRNAs (23S and 16S). Processes some mRNAs, and tRNAs when they are encoded in the rRNA operon. Processes pre-crRNA and tracrRNA of type II CRISPR loci if present in the organism. This Mycoplasmoides pneumoniae (strain ATCC 15531 / DSM 23978 / CIP 103766 / NBRC 14401 / NCTC 10119 / FH) (Mycoplasma pneumoniae) protein is Ribonuclease 3.